Consider the following 1107-residue polypeptide: Rho GTPase-activating protein 39 (1107 aa).

The segment at 1–21 (MSQAQDYECRSHHVDEQEPRI) is disordered. Ser-2 bears the N-acetylserine mark. Positions 7-19 (YECRSHHVDEQEP) are enriched in basic and acidic residues. 2 consecutive WW domains span residues 25–58 (STRLEWVEIIEPRTRERMYANLVTGECVWDPPAG) and 63–97 (RTSEDQWWELFDPNTSRFYYYSAASQRTVWHRPQN). Residues 111-122 (QNTESPRASADN) show a composition bias toward polar residues. Disordered stretches follow at residues 111–173 (QNTE…PPGV), 218–267 (PSFL…PERR), 282–311 (SPLLIQPRKPSSDSQPSSPRYGYEPPLYEE), and 326–370 (MDVQ…LMRT). Residues 123 to 136 (SPGRGSRDGSTGSS) show a composition bias toward low complexity. Polar residues predominate over residues 242-254 (SGSQHSPNLQTFV). Residue Ser-282 is modified to Phosphoserine. Composition is skewed to polar residues over residues 331 to 343 (EANSPYQTGSPQR) and 353 to 369 (LQTTKQTPTSPCQQLMR). Phosphoserine occurs at positions 380, 384, 402, and 403. 3 disordered regions span residues 404–429 (PKLRAGPRHKYAPNPGGGTYSLQPSP), 441–529 (SGDY…RASL), and 563–585 (MKQRGSWDSQQDGSGYESDGAVP). Positions 470–484 (SWSSQQDTMSSTGYS) are enriched in polar residues. Phosphoserine is present on residues Ser-597, Ser-683, Ser-708, and Ser-719. In terms of domain architecture, MyTH4 spans 715–867 (WSSESIKKPM…PYVEEPDGVA (153 aa)). The Rho-GAP domain maps to 914–1102 (SALQEVMSMQ…VLIQHLDTSF (189 aa)).

The protein localises to the nucleus. This is Rho GTPase-activating protein 39 (Arhgap39) from Mus musculus (Mouse).